Consider the following 130-residue polypeptide: Glycine cleavage system H protein (130 aa).

The Lipoyl-binding domain maps to 24-106 (IYSVGITEHA…YTDGWLFRIK (83 aa)). Lysine 65 carries the post-translational modification N6-lipoyllysine.

It belongs to the GcvH family. As to quaternary structure, the glycine cleavage system is composed of four proteins: P, T, L and H. (R)-lipoate serves as cofactor.

Functionally, the glycine cleavage system catalyzes the degradation of glycine. The H protein shuttles the methylamine group of glycine from the P protein to the T protein. This is Glycine cleavage system H protein from Pectobacterium atrosepticum (strain SCRI 1043 / ATCC BAA-672) (Erwinia carotovora subsp. atroseptica).